A 1663-amino-acid chain; its full sequence is MGPTSGPSLLLLLLTHLPLALGSPMYSIITPNILRLESEETMVLEAHDAQGDVPVTVTVHDFPGKKLVLSSEKTVLTPATNHMGNVTFTIPANREFKSEKGRNKFVTVQATFGTQVVEKVVLVSLQSGYLFIQTDKTIYTPGSTVLYRIFTVNHKLLPVGRTVMVNIENPEGIPVKQDSLSSQNQLGVLPLSWDIPELVNMGQWKIRAYYENSPQQVFSTEFEVKEYVLPSFEVIVEPTEKFYYIYNEKGLEVTITARFLYGKKVEGTAFVIFGIQDGEQRISLPESLKRIPIEDGSGEVVLSRKVLLDGVQNPRAEDLVGKSLYVSATVILHSGSDMVQAERSGIPIVTSPYQIHFTKTPKYFKPGMPFDLMVFVTNPDGSPAYRVPVAVQGEDTVQSLTQGDGVAKLSINTHPSQKPLSITVRTKKQELSEAEQATRTMQALPYSTVGNSNNYLHLSVLRTELRPGETLNVNFLLRMDRAHEAKIRYYTYLIMNKGRLLKAGRQVREPGQDLVVLPLSITTDFIPSFRLVAYYTLIGASGQREVVADSVWVDVKDSCVGSLVVKSGQSEDRQPVPGQQMTLKIEGDHGARVVLVAVDKGVFVLNKKNKLTQSKIWDVVEKADIGCTPGSGKDYAGVFSDAGLTFTSSSGQQTAQRAELQCPQPAARRRRSVQLTEKRMDKVGKYPKELRKCCEDGMRENPMRFSCQRRTRFISLGEACKKVFLDCCNYITELRRQHARASHLGLARSNLDEDIIAEENIVSRSEFPESWLWNVEDLKEPPKNGISTKLMNIFLKDSITTWEILAVSMSDKKGICVADPFEVTVMQDFFIDLRLPYSVVRNEQVEIRAVLYNYRQNQELKVRVELLHNPAFCSLATTKRRHQQTVTIPPKSSLSVPYVIVPLKTGLQEVEVKAAVYHHFISDGVRKSLKVVPEGIRMNKTVAVRTLDPERLGREGVQKEDIPPADLSDQVPDTESETRILLQGTPVAQMTEDAVDAERLKHLIVTPSGCGEQNMIGMTPTVIAVHYLDETEQWEKFGLEKRQGALELIKKGYTQQLAFRQPSSAFAAFVKRAPSTWLTAYVVKVFSLAVNLIAIDSQVLCGAVKWLILEKQKPDGVFQEDAPVIHQEMIGGLRNNNEKDMALTAFVLISLQEAKDICEEQVNSLPGSITKAGDFLEANYMNLQRSYTVAIAGYALAQMGRLKGPLLNKFLTTAKDKNRWEDPGKQLYNVEATSYALLALLQLKDFDFVPPVVRWLNEQRYYGGGYGSTQATFMVFQALAQYQKDAPDHQELNLDVSLQLPSRSSKITHRIHWESASLLRSEETKENEGFTVTAEGKGQGTLSVVTMYHAKAKDQLTCNKFDLKVTIKPAPETEKRPQDAKNTMILEICTRYRGDQDATMSILDISMMTGFAPDTDDLKQLANGVDRYISKYELDKAFSDRNTLIIYLDKVSHSEDDCLAFKVHQYFNVELIQPGAVKVYAYYNLEESCTRFYHPEKEDGKLNKLCRDELCRCAEENCFIQKSDDKVTLEERLDKACEPGVDYVYKTRLVKVQLSNDFDEYIMAIEQTIKSGSDEVQVGQQRTFISPIKCREALKLEEKKHYLMWGLSSDFWGEKPNLSYIIGKDTWVEHWPEEDECQDEENQKQCQDLGAFTESMVVFGCPN.

A signal peptide spans 1-22 (MGPTSGPSLLLLLLTHLPLALG). A phosphoserine; by FAM20C mark is found at serine 38 and serine 70. Asparagine 85 carries an N-linked (GlcNAc...) asparagine glycan. Residues serine 297 and serine 303 each carry the phosphoserine; by FAM20C modification. 13 cysteine pairs are disulfide-bonded: cysteine 559–cysteine 816, cysteine 627–cysteine 662, cysteine 693–cysteine 720, cysteine 694–cysteine 727, cysteine 707–cysteine 728, cysteine 873–cysteine 1513, cysteine 1101–cysteine 1158, cysteine 1358–cysteine 1489, cysteine 1389–cysteine 1458, cysteine 1506–cysteine 1511, cysteine 1518–cysteine 1590, cysteine 1537–cysteine 1661, and cysteine 1637–cysteine 1646. Phosphoserine; by FAM20C is present on serine 672. The Anaphylatoxin-like domain maps to 693–728 (CCEDGMRENPMRFSCQRRTRFISLGEACKKVFLDCC). Residue asparagine 939 is glycosylated (N-linked (GlcNAc...) asparagine). The segment at 954 to 973 (REGVQKEDIPPADLSDQVPD) is disordered. Serine 968 is subject to Phosphoserine; by FAM20C. The isoglutamyl cysteine thioester (Cys-Gln) cross-link spans 1010–1013 (CGEQ). The residue at position 1321 (serine 1321) is a Phosphoserine; by FAM20C. One can recognise an NTR domain in the interval 1518–1661 (CFIQKSDDKV…FTESMVVFGC (144 aa)). The residue at position 1573 (serine 1573) is a Phosphoserine; by FAM20C. The N-linked (GlcNAc...) asparagine glycan is linked to asparagine 1617. The tract at residues 1634 to 1659 (EDECQDEENQKQCQDLGAFTESMVVF) is interaction with CFP/properdin.

As to quaternary structure, in absence of complement activation, the C3 precursor is first processed by the removal of 4 Arg residues, forming two chains, beta and alpha, linked by a disulfide bond. Complement C3b is composed of complement C3b and complement C3 beta chains that are associated via disulfide bonds. Non-enzymatic component of the C5 convertase, also named C4bC2bC3b, composed of the serine protease complement C2b (C2), complement C3b, as well as complement C4b (C4). Non-enzymatic component of the C5 convertase of the alternative complement pathways composed of the serine protease complement CFB and complement C3b. Interacts with CFP; interaction takes place together with CFB in the alternative complement system and allows the complex to become active. Interacts with CR1 (via Sushi 8 and Sushi 9 domains). Interacts with CFH. In terms of assembly, interacts with CFH. Interacts with CR2. As to quaternary structure, during pregnancy, C3dg exists as a complex (probably a 2:2:2 heterohexamer) with AGT and the proform of PRG2. Interacts with CR2 (via the N-terminal Sushi domains 1 and 2). (Microbial infection) C3b interacts with herpes simplex virus 1 (HHV-1) and herpes simplex virus 2 (HHV-2) envelope glycoprotein C; this interaction inhibits the activation of the complement system. In terms of assembly, (Microbial infection) Interacts with Staphylococcus aureus immunoglobulin-binding protein Sbi; this interaction prevents the association between C3dg and CR2. As to quaternary structure, (Microbial infection) Interacts with Staphylococcus aureus protein Fib. C3 precursor is first processed by the removal of 4 Arg residues, forming two chains, beta and alpha, linked by a disulfide bond. During activation of the complement systems, the alpha chain is cleaved into C3a and C3b by the C3 convertase: C3b stays linked to the beta chain, while C3a is released in the plasma. The alpha chain is cleaved by the serine protease complement C2b component of the C3 convertase to generate C3a and C3b following activation by the classical, lectin and GZMK complement systems. The alpha chain is cleaved by CFB component of the C3 convertase to generate C3a and C3b following activation by the alternative complement system. Post-translationally, C3a is further processed by carboxypeptidases to release the C-terminal arginine residue generating the acylation stimulating protein (ASP). Levels of ASP are increased in adipocytes in the postprandial period and by insulin and dietary chylomicrons. In terms of processing, complement C3b is rapidly split in two positions by factor I (CFI) and a cofactor (CFH) to form iC3b (inactivated C3b) and C3f which is released. CFI and CFH catalyze proteolytic degradation of already-deposited complement C3b. Then iC3b is slowly cleaved (possibly by CFI) to form C3c (beta chain + alpha' chain fragment 1 + alpha' chain fragment 2), C3dg and C3f. Other proteases produce other fragments such as C3d or C3g. Upon activation, the internal thioester bond reacts with carbohydrate antigens on the target surface to form amide or ester bonds, leading to covalent association with the surface of pathogens. Post-translationally, complement C3b interacts with complement C4b via a thioester linkage. In terms of processing, phosphorylated by FAM20C in the extracellular medium. (Microbial infection) C3 is cleaved by Staphylococcus aureus aureolysin; this cleavage renders C3a and C3b inactive. C3b is rapidly degraded by host factors CFH and CFI preventing its deposition on the bacterial surface while C3a is further inactivated by aureolysin. Post-translationally, (Microbial infection) Complement C3 beta chain is cleaved and inactivated by S.pyogenes SpeB. In terms of processing, (Microbial infection) Cleaved by N.meningitidis NalP between Leu-744 and Gly-745, generating a slightly shorter C3 alpha form and a slightly longer C3 beta form. The C3b-like fragment is degraded in the presence of the complement regulators CFH and CFI, preventing its deposition on the bacterial surface. Plasma. In terms of tissue distribution, produced in adipocytes and released into the plasma during both the fasting and postprandial periods.

The protein resides in the secreted. The protein localises to the cell surface. Complement activation is inhibited by VSIG4. Its function is as follows. Precursor of non-enzymatic components of the classical, alternative, lectin and GZMK complement pathways, which consist in a cascade of proteins that leads to phagocytosis and breakdown of pathogens and signaling that strengthens the adaptive immune system. Non-enzymatic component of C5 convertase. Generated following cleavage by C3 convertase, it covalently attaches to the surface of pathogens, where it acts as an opsonin that marks the surface of antigens for removal. Complement C3b binds covalently via its reactive thioester, to cell surface carbohydrates or immune aggregates. Together with complement C4b, it then recruits the serine protease complement C2b to form the C5 convertase, which cleaves and activate C5, the next component of the complement pathways. In the alternative complement pathway, recruits the serine protease CFB to form the C5 convertase that cleaves and activates C5. In terms of biological role, mediator of local inflammatory process released following cleavage by C3 convertase. Acts by binding to its receptor, C3AR1, activating G protein-coupled receptor signaling, promoting the phosphorylation, ARRB2-mediated internalization and endocytosis of C3AR1. C3a anaphylatoxin stimulates the activation of immune cells such as mast cells and basophilic leukocytes to release inflammation agents, such as cytokines, chemokines and histamine, which promote inflammation development. Also acts as potent chemoattractant for the migration of macrophages and neutrophils to the inflamed tissues, resulting in neutralization of the inflammatory triggers by multiple ways, such as phagocytosis and generation of reactive oxidants. Functionally, adipogenic hormone that stimulates triglyceride synthesis and glucose transport in adipocytes, regulating fat storage and playing a role in postprandial triglyceride clearance. Appears to stimulate triglyceride synthesis via activation of the PLC, MAPK and AKT signaling pathways. Acts by binding to its receptor, C5AR2, activating G protein-coupled receptor signaling, promoting the phosphorylation, ARRB2-mediated internalization and endocytosis of C5AR2. Its function is as follows. Acts as a chemoattractant for neutrophils in chronic inflammation. This Homo sapiens (Human) protein is Complement C3.